The primary structure comprises 277 residues: 4-hydroxy-tetrahydrodipicolinate reductase (277 aa).

NAD(+)-binding positions include 11–16 (GALGRM) and 110–112 (GTT). The Proton donor/acceptor role is filled by histidine 166. Histidine 167 contacts (S)-2,3,4,5-tetrahydrodipicolinate. The Proton donor role is filled by lysine 170. Residue 176–177 (GT) participates in (S)-2,3,4,5-tetrahydrodipicolinate binding.

This sequence belongs to the DapB family.

It is found in the cytoplasm. The catalysed reaction is (S)-2,3,4,5-tetrahydrodipicolinate + NAD(+) + H2O = (2S,4S)-4-hydroxy-2,3,4,5-tetrahydrodipicolinate + NADH + H(+). The enzyme catalyses (S)-2,3,4,5-tetrahydrodipicolinate + NADP(+) + H2O = (2S,4S)-4-hydroxy-2,3,4,5-tetrahydrodipicolinate + NADPH + H(+). It participates in amino-acid biosynthesis; L-lysine biosynthesis via DAP pathway; (S)-tetrahydrodipicolinate from L-aspartate: step 4/4. In terms of biological role, catalyzes the conversion of 4-hydroxy-tetrahydrodipicolinate (HTPA) to tetrahydrodipicolinate. The sequence is that of 4-hydroxy-tetrahydrodipicolinate reductase from Synechococcus sp. (strain CC9902).